Reading from the N-terminus, the 246-residue chain is 1-(5-phosphoribosyl)-5-[(5-phosphoribosylamino)methylideneamino] imidazole-4-carboxamide isomerase (246 aa).

The Proton acceptor role is filled by Asp-8. Asp-130 acts as the Proton donor in catalysis.

It belongs to the HisA/HisF family.

It is found in the cytoplasm. It catalyses the reaction 1-(5-phospho-beta-D-ribosyl)-5-[(5-phospho-beta-D-ribosylamino)methylideneamino]imidazole-4-carboxamide = 5-[(5-phospho-1-deoxy-D-ribulos-1-ylimino)methylamino]-1-(5-phospho-beta-D-ribosyl)imidazole-4-carboxamide. It participates in amino-acid biosynthesis; L-histidine biosynthesis; L-histidine from 5-phospho-alpha-D-ribose 1-diphosphate: step 4/9. This chain is 1-(5-phosphoribosyl)-5-[(5-phosphoribosylamino)methylideneamino] imidazole-4-carboxamide isomerase, found in Hydrogenovibrio crunogenus (strain DSM 25203 / XCL-2) (Thiomicrospira crunogena).